A 319-amino-acid polypeptide reads, in one-letter code: Acetyl-coenzyme A carboxylase carboxyl transferase subunit alpha (319 aa).

A CoA carboxyltransferase C-terminal domain is found at 35 to 296 (DLDKELEQLE…KATLLRQLAD (262 aa)).

This sequence belongs to the AccA family. Acetyl-CoA carboxylase is a heterohexamer composed of biotin carboxyl carrier protein (AccB), biotin carboxylase (AccC) and two subunits each of ACCase subunit alpha (AccA) and ACCase subunit beta (AccD).

It is found in the cytoplasm. It catalyses the reaction N(6)-carboxybiotinyl-L-lysyl-[protein] + acetyl-CoA = N(6)-biotinyl-L-lysyl-[protein] + malonyl-CoA. It participates in lipid metabolism; malonyl-CoA biosynthesis; malonyl-CoA from acetyl-CoA: step 1/1. Component of the acetyl coenzyme A carboxylase (ACC) complex. First, biotin carboxylase catalyzes the carboxylation of biotin on its carrier protein (BCCP) and then the CO(2) group is transferred by the carboxyltransferase to acetyl-CoA to form malonyl-CoA. The sequence is that of Acetyl-coenzyme A carboxylase carboxyl transferase subunit alpha from Vibrio cholerae serotype O1 (strain ATCC 39541 / Classical Ogawa 395 / O395).